The following is a 45-amino-acid chain: Large ribosomal subunit protein bL36 (45 aa).

Positions 1–45 are disordered; it reads MKVSSSIKADPSKGDKLVRRKGRLYVINKKDPNRKQRQAGPARKK.

The protein belongs to the bacterial ribosomal protein bL36 family.

This Chlamydia caviae (strain ATCC VR-813 / DSM 19441 / 03DC25 / GPIC) (Chlamydophila caviae) protein is Large ribosomal subunit protein bL36.